A 148-amino-acid polypeptide reads, in one-letter code: Ubiquitin-like protein 4A (148 aa).

The 76-residue stretch at 1 to 76 (MQLTVKALKG…LNLMVKEQVA (76 aa)) folds into the Ubiquitin-like domain.

Component of the bag6/bat3 complex.

The protein localises to the cytoplasm. It localises to the cytosol. The protein resides in the nucleus. Its function is as follows. As part of a cytosolic protein quality control complex, the bag6/bat3 complex, maintains misfolded and hydrophobic patches-containing proteins in a soluble state and participates in their proper delivery to the endoplasmic reticulum or alternatively can promote their sorting to the proteasome where they undergo degradation. The bag6/bat3 complex is involved in the post-translational delivery of tail-anchored/type II transmembrane proteins to the endoplasmic reticulum membrane. Similarly, the bag6/bat3 complex also functions as a sorting platform for proteins of the secretory pathway that are mislocalized to the cytosol either delivering them to the proteasome for degradation or to the endoplasmic reticulum. The bag6/bat3 complex also plays a role in the endoplasmic reticulum-associated degradation (ERAD), a quality control mechanism that eliminates unwanted proteins of the endoplasmic reticulum through their retrotranslocation to the cytosol and their targeting to the proteasome. It maintains these retrotranslocated proteins in an unfolded yet soluble state condition in the cytosol to ensure their proper delivery to the proteasome. The protein is Ubiquitin-like protein 4A (ubl4a) of Xenopus tropicalis (Western clawed frog).